The following is a 422-amino-acid chain: Bifunctional enzyme IspD/IspF (422 aa).

Residues 1 to 267 (MAVGLLLLAA…PISALSMPLP (267 aa)) form a 2-C-methyl-D-erythritol 4-phosphate cytidylyltransferase region. A 2-C-methyl-D-erythritol 2,4-cyclodiphosphate synthase region spans residues 268–422 (LIGVGIDFHK…AIAVAQIYHR (155 aa)). A divalent metal cation contacts are provided by D274 and H276. 4-CDP-2-C-methyl-D-erythritol 2-phosphate is bound by residues 274–276 (DFH) and 301–302 (HS). Position 309 (H309) interacts with a divalent metal cation. Residues 323–325 (DIG), F404, and R407 each bind 4-CDP-2-C-methyl-D-erythritol 2-phosphate.

In the N-terminal section; belongs to the IspD/TarI cytidylyltransferase family. IspD subfamily. The protein in the C-terminal section; belongs to the IspF family. A divalent metal cation serves as cofactor.

It catalyses the reaction 2-C-methyl-D-erythritol 4-phosphate + CTP + H(+) = 4-CDP-2-C-methyl-D-erythritol + diphosphate. It carries out the reaction 4-CDP-2-C-methyl-D-erythritol 2-phosphate = 2-C-methyl-D-erythritol 2,4-cyclic diphosphate + CMP. The protein operates within isoprenoid biosynthesis; isopentenyl diphosphate biosynthesis via DXP pathway; isopentenyl diphosphate from 1-deoxy-D-xylulose 5-phosphate: step 2/6. It participates in isoprenoid biosynthesis; isopentenyl diphosphate biosynthesis via DXP pathway; isopentenyl diphosphate from 1-deoxy-D-xylulose 5-phosphate: step 4/6. In terms of biological role, bifunctional enzyme that catalyzes the formation of 4-diphosphocytidyl-2-C-methyl-D-erythritol from CTP and 2-C-methyl-D-erythritol 4-phosphate (MEP) (IspD), and catalyzes the conversion of 4-diphosphocytidyl-2-C-methyl-D-erythritol 2-phosphate (CDP-ME2P) to 2-C-methyl-D-erythritol 2,4-cyclodiphosphate (ME-CPP) with a corresponding release of cytidine 5-monophosphate (CMP) (IspF). This is Bifunctional enzyme IspD/IspF from Tropheryma whipplei (strain TW08/27) (Whipple's bacillus).